Reading from the N-terminus, the 253-residue chain is Claudin domain-containing protein 1 (253 aa).

A helical transmembrane segment spans residues 5-25; sequence FATAFVIACVLSLISTIYMAA. N-linked (GlcNAc...) asparagine glycosylation is found at Asn42 and Asn72. 3 consecutive transmembrane segments (helical) span residues 141–161, 175–195, and 216–236; these read FLLP…GLCA, ILHL…VAGI, and FCLA…FIWA.

The protein belongs to the PMP-22/EMP/MP20 family.

The protein localises to the cell junction. It localises to the tight junction. It is found in the cell membrane. Plays a role in negatively regulating the permeability of cells to small molecules. This Macaca fascicularis (Crab-eating macaque) protein is Claudin domain-containing protein 1 (CLDND1).